A 306-amino-acid chain; its full sequence is uncharacterized protein (306 aa).

A coiled-coil region spans residues 277 to 306; that stretch reads TEIIQNYKIANELKKEKQQNKKKNSIELEE.

This is an uncharacterized protein from Saccharolobus islandicus (Sulfolobus islandicus).